The chain runs to 773 residues: Carnitine O-palmitoyltransferase 1, liver isoform (773 aa).

The residue at position 2 (Ala2) is an N-acetylalanine. The Cytoplasmic segment spans residues 2–47 (AEAHQAVAFQFTVTPDGIDLRLSHEALKQICLSGLHSWKKKFIRFK). The chain crosses the membrane as a helical span at residues 48-73 (NGIITGVFPANPSSWLIVVVGVISSM). At 74 to 102 (HAKVDPSLGMIAKISRTLDTTGRMSSQTK) the chain is on the mitochondrial intermembrane side. Residues 103–122 (NIVSGVLFGTGLWVAVIMTM) form a helical membrane-spanning segment. Topologically, residues 123 to 773 (RYSLKVLLSY…LFGLTINSKK (651 aa)) are cytoplasmic. Tyr282 is modified (3'-nitrotyrosine). His473 (proton acceptor) is an active-site residue. 555–567 (GKGLIKKCRTSPD) contributes to the CoA binding site. Thr588 is subject to Phosphothreonine. Position 589 is a 3'-nitrotyrosine (Tyr589). Residues Tyr589 and Thr602 each coordinate (R)-carnitine. Position 604 is a phosphothreonine (Thr604). A phosphoserine mark is found at Ser741 and Ser747.

The protein belongs to the carnitine/choline acetyltransferase family. Homohexamer and homotrimer. Identified in a complex that contains at least CPT1A, ACSL1 and VDAC1. Also identified in complexes with ACSL1 and VDAC2 and VDAC3. Interacts with ZDHHC4. As to expression, liver and kidney.

The protein resides in the mitochondrion outer membrane. It catalyses the reaction (R)-carnitine + hexadecanoyl-CoA = O-hexadecanoyl-(R)-carnitine + CoA. The enzyme catalyses succinyl-CoA + L-lysyl-[protein] = N(6)-succinyl-L-lysyl-[protein] + CoA + H(+). The protein operates within lipid metabolism; fatty acid beta-oxidation. Inhibited by malonyl-CoA. Functionally, catalyzes the transfer of the acyl group of long-chain fatty acid-CoA conjugates onto carnitine, an essential step for the mitochondrial uptake of long-chain fatty acids and their subsequent beta-oxidation in the mitochondrion. Also possesses a lysine succinyltransferase activity that can regulate enzymatic activity of substrate proteins such as ENO1 and metabolism independent of its classical carnitine O-palmitoyltransferase activity. Plays an important role in hepatic triglyceride metabolism. Also plays a role in inducible regulatory T-cell (iTreg) differentiation once activated by butyryl-CoA that antagonizes malonyl-CoA-mediated CPT1A repression. Sustains the IFN-I response by recruiting ZDHCC4 to palmitoylate MAVS at the mitochondria leading to MAVS stabilization and activation. This Rattus norvegicus (Rat) protein is Carnitine O-palmitoyltransferase 1, liver isoform (Cpt1a).